The primary structure comprises 228 residues: Protein JAZ7 (228 aa).

The Tify domain occupies 101-136 (LSPNESTLTIFYMGEVHIFPGISPEKAELIIDLVSK). Positions 176 to 199 (MARRATLARFLEKRKHRLIKARPY) match the Jas motif. Residues 177–184 (ARRATLAR) carry the Nuclear localization signal motif.

This sequence belongs to the TIFY/JAZ family. As to quaternary structure, interacts with MYC2 (via N-terminus). JAZ7 competes with MED25 for binding to MYC2. Interacts with MTB1 (via N-terminus).

The protein resides in the nucleus. In terms of biological role, repressor of jasmonate responses. The protein is Protein JAZ7 of Solanum lycopersicum (Tomato).